We begin with the raw amino-acid sequence, 713 residues long: UvrABC system protein B (713 aa).

Positions 35-421 (RRIRAGEKDV…GDGFVEQIIR (387 aa)) constitute a Helicase ATP-binding domain. Residue 48–55 (GATGTGKS) coordinates ATP. The Beta-hairpin motif lies at 101–124 (YYDYYQPEAYVPQSDTYIEKDSSI). Positions 438–604 (QIDDLVHEIR…PLRKKINDIV (167 aa)) constitute a Helicase C-terminal domain. The interval 624 to 663 (QAKDGKGAKAPVPSLGGKAAAKGAKSAKGKAKETVPTDRP) is disordered. Low complexity predominate over residues 639–649 (GGKAAAKGAKS). The segment covering 653–663 (KAKETVPTDRP) has biased composition (basic and acidic residues). A UVR domain is found at 668–703 (AEEIEELTNRMRAAAADLQFEIAARLRDEVSEMKKE).

The protein belongs to the UvrB family. In terms of assembly, forms a heterotetramer with UvrA during the search for lesions. Interacts with UvrC in an incision complex.

The protein resides in the cytoplasm. Functionally, the UvrABC repair system catalyzes the recognition and processing of DNA lesions. A damage recognition complex composed of 2 UvrA and 2 UvrB subunits scans DNA for abnormalities. Upon binding of the UvrA(2)B(2) complex to a putative damaged site, the DNA wraps around one UvrB monomer. DNA wrap is dependent on ATP binding by UvrB and probably causes local melting of the DNA helix, facilitating insertion of UvrB beta-hairpin between the DNA strands. Then UvrB probes one DNA strand for the presence of a lesion. If a lesion is found the UvrA subunits dissociate and the UvrB-DNA preincision complex is formed. This complex is subsequently bound by UvrC and the second UvrB is released. If no lesion is found, the DNA wraps around the other UvrB subunit that will check the other stand for damage. This Streptomyces avermitilis (strain ATCC 31267 / DSM 46492 / JCM 5070 / NBRC 14893 / NCIMB 12804 / NRRL 8165 / MA-4680) protein is UvrABC system protein B.